The chain runs to 320 residues: L-lactate dehydrogenase A (320 aa).

Substrate contacts are provided by Arg-88, Asn-120, and Arg-151. Asn-120 is an NAD(+) binding site. Residue His-175 is the Proton acceptor of the active site.

This sequence belongs to the LDH/MDH superfamily. LDH family. As to quaternary structure, homotetramer.

It localises to the cytoplasm. The catalysed reaction is (S)-lactate + NAD(+) = pyruvate + NADH + H(+). It participates in fermentation; pyruvate fermentation to lactate; (S)-lactate from pyruvate: step 1/1. Converts pyruvate to lactate. The sequence is that of L-lactate dehydrogenase A (LDHA) from Rhizopus oryzae (Mucormycosis agent).